A 149-amino-acid chain; its full sequence is Large ribosomal subunit protein bL9 (149 aa).

The protein belongs to the bacterial ribosomal protein bL9 family.

Binds to the 23S rRNA. The polypeptide is Large ribosomal subunit protein bL9 (Magnetococcus marinus (strain ATCC BAA-1437 / JCM 17883 / MC-1)).